Here is a 407-residue protein sequence, read N- to C-terminus: 4-hydroxy-3-methylbut-2-en-1-yl diphosphate synthase (ferredoxin) (407 aa).

[4Fe-4S] cluster contacts are provided by Cys-316, Cys-319, Cys-350, and Glu-357.

Belongs to the IspG family. [4Fe-4S] cluster is required as a cofactor.

The enzyme catalyses (2E)-4-hydroxy-3-methylbut-2-enyl diphosphate + 2 oxidized [2Fe-2S]-[ferredoxin] + H2O = 2-C-methyl-D-erythritol 2,4-cyclic diphosphate + 2 reduced [2Fe-2S]-[ferredoxin] + H(+). It participates in isoprenoid biosynthesis; isopentenyl diphosphate biosynthesis via DXP pathway; isopentenyl diphosphate from 1-deoxy-D-xylulose 5-phosphate: step 5/6. Converts 2C-methyl-D-erythritol 2,4-cyclodiphosphate (ME-2,4cPP) into 1-hydroxy-2-methyl-2-(E)-butenyl 4-diphosphate. The protein is 4-hydroxy-3-methylbut-2-en-1-yl diphosphate synthase (ferredoxin) of Prochlorococcus marinus (strain SARG / CCMP1375 / SS120).